The sequence spans 402 residues: Renin (402 aa).

The first 26 residues, 1–26, serve as a signal peptide directing secretion; the sequence is MGGRRMPLWALLLLWTSCSFSLPTDT. Positions 27 to 64 are cleaved as a propeptide — activation peptide; sequence ASFGRILLKKMPSVREILEERGVDMTRISAEWGEFIKK. Asn-69 carries an N-linked (GlcNAc...) asparagine glycan. The Peptidase A1 domain occupies 84-399; sequence YYGEIGIGTP…DRHNNRIGFA (316 aa). Asp-102 is a catalytic residue. Cys-115 and Cys-122 are joined by a disulfide. Asn-139 is a glycosylation site (N-linked (GlcNAc...) asparagine). A disulfide bridge connects residues Cys-278 and Cys-282. Asp-287 is an active-site residue. Asn-320 carries N-linked (GlcNAc...) asparagine glycosylation. Cysteines 321 and 358 form a disulfide.

The protein belongs to the peptidase A1 family. Interacts with ATP6AP2.

It is found in the secreted. Its subcellular location is the membrane. The enzyme catalyses Cleavage of Leu-|-Xaa bond in angiotensinogen to generate angiotensin I.. Interaction with ATP6AP2 results in a 5-fold increased efficiency in angiotensinogen processing. Renin is a highly specific endopeptidase, whose only known function is to generate angiotensin I from angiotensinogen in the plasma, initiating a cascade of reactions that produce an elevation of blood pressure and increased sodium retention by the kidney. The sequence is that of Renin (Ren1) from Rattus norvegicus (Rat).